A 335-amino-acid polypeptide reads, in one-letter code: Tetraacyldisaccharide 4'-kinase (335 aa).

58 to 65 (TVGGNGKT) is a binding site for ATP.

Belongs to the LpxK family.

It catalyses the reaction a lipid A disaccharide + ATP = a lipid IVA + ADP + H(+). It participates in glycolipid biosynthesis; lipid IV(A) biosynthesis; lipid IV(A) from (3R)-3-hydroxytetradecanoyl-[acyl-carrier-protein] and UDP-N-acetyl-alpha-D-glucosamine: step 6/6. Transfers the gamma-phosphate of ATP to the 4'-position of a tetraacyldisaccharide 1-phosphate intermediate (termed DS-1-P) to form tetraacyldisaccharide 1,4'-bis-phosphate (lipid IVA). This Dichelobacter nodosus (strain VCS1703A) protein is Tetraacyldisaccharide 4'-kinase.